A 158-amino-acid chain; its full sequence is MTVPHPESVGEPGIAVRAPARRRSAWHGQAPVVAVVALGGGIGGTARYAAALLWPTQSGGFPWTTFWVNVVGCAVIGVFMVVITDVWPAHRLVRPFFGTGVLGGFTTFSTYAVDIQKLVDAGHPRTALAYLAATLLAALAAVRLAATAARRVLVRRRR.

4 helical membrane passes run 25–45 (AWHG…IGGT), 63–83 (WTTF…MVVI), 95–115 (PFFG…AVDI), and 126–146 (TALA…RLAA). Gly-103 and Thr-106 together coordinate Na(+).

The protein belongs to the fluoride channel Fluc/FEX (TC 1.A.43) family.

The protein resides in the cell membrane. It catalyses the reaction fluoride(in) = fluoride(out). Its activity is regulated as follows. Na(+) is not transported, but it plays an essential structural role and its presence is essential for fluoride channel function. Functionally, fluoride-specific ion channel. Important for reducing fluoride concentration in the cell, thus reducing its toxicity. The chain is Fluoride-specific ion channel FluC 2 from Streptomyces avermitilis (strain ATCC 31267 / DSM 46492 / JCM 5070 / NBRC 14893 / NCIMB 12804 / NRRL 8165 / MA-4680).